The following is a 1178-amino-acid chain: Leucine--tRNA ligase, cytoplasmic (1178 aa).

L-leucine-binding residues include tyrosine 54 and tyrosine 56. The 'HIGH' region signature appears at 62–65 (HLGH). Residue serine 169 is modified to Phosphoserine. The segment at 262–511 (GPQEYTLVKL…DAGDALIYME (250 aa)) is editing domain. The L-leucine site is built by leucine 596 and serine 599. A 'KMSKS' region motif is present at residues 718–722 (KMSKS). Lysine 721 lines the ATP pocket. The residue at position 722 (serine 722) is a Phosphoserine. N6-acetyllysine occurs at positions 972 and 1049.

It belongs to the class-I aminoacyl-tRNA synthetase family.

It localises to the cytoplasm. The enzyme catalyses tRNA(Leu) + L-leucine + ATP = L-leucyl-tRNA(Leu) + AMP + diphosphate. The catalysed reaction is L-methionyl-tRNA(Leu) + H2O = tRNA(Leu) + L-methionine + H(+). Its activity is regulated as follows. 5-fluoro-1,3-dihydro-1-hydroxy-1,2-benzoxaborole inhibits LARS1 by forming a covalent adduct with the 3' adenosine of tRNA(Leu) at the editing site, thus locking the enzyme in an inactive conformation. In terms of biological role, aminoacyl-tRNA synthetase that catalyzes the specific attachment of leucine to its cognate tRNA (tRNA(Leu)). It performs tRNA aminoacylation in a two-step reaction: Leu is initially activated by ATP to form a leucyl-adenylate (Leu-AMP) intermediate; then the leucyl moiety is transferred to the acceptor 3' end of the tRNA to yield leucyl-tRNA. To improve the fidelity of catalytic reactions, it is also able to hydrolyze misactivated aminoacyl-adenylate intermediates (pre-transfer editing) and mischarged aminoacyl-tRNAs (post-transfer editing). In Mus musculus (Mouse), this protein is Leucine--tRNA ligase, cytoplasmic (Lars1).